The chain runs to 694 residues: MAREYKIEDYRNFGIMAHIDAGKTTMTERILFYTGKNHKIGETHDGASTMDWMEQEQERGITITSAATTTFWQGRDGKKRRFNIIDTPGHVDFTIEVERSLRVLDGAIALLDANAGVEPQTETVWRQAEKYHVPRMVFVNKMDKIGADFYRSVEMVGSRLGAVALPVQLPIGAENDFVGVVDLIEMKALTWDGTIGAPATVGEIPADMADKAEEYREKLIELAVEIDEAAMEAYLEGTMPTNDELRALIRKGTIEVKFHPILCGTAFKNRGVQPLLDAVVEFLPAPTDVPAIKGIDVKTETETTRESSDEAPLSMLAFKIMNDPFVGSLTFARIYSGKLTKGVSLENTVKGKRERIGRMLQMHSNSREDIDEAFAGDIVALAGLKETTTGDTLCDPLKPVILERMEFPDPVIEIAIEPKTKADQEKMGIALNRLAAEDPSFRVKSDEESGQTIIAGMGELHLDILVDRMKREFKVEANVGAPQVAYRESITRAAEIDYTHKKQSGGSGQFARVKIIFEPHDGDDFIFESKIVGGSVPKEYIPGVQKGIESVMGAGPLAGFPMLGVKATLIDGAYHDVDSSVLAFEIASRAAFREGAQKAGAQLLEPIMKVEVVTPEDYVGDVIGDLNSRRGQISGTEARGIATVVNAMVPLANMFGYVNSLRSMSQGRAQYTMQFDHYEPVPTAVAQEIQKKFA.

Residues 8–287 (EDYRNFGIMA…AVVEFLPAPT (280 aa)) enclose the tr-type G domain. GTP contacts are provided by residues 17–24 (AHIDAGKT), 86–90 (DTPGH), and 140–143 (NKMD).

Belongs to the TRAFAC class translation factor GTPase superfamily. Classic translation factor GTPase family. EF-G/EF-2 subfamily.

It is found in the cytoplasm. Its function is as follows. Catalyzes the GTP-dependent ribosomal translocation step during translation elongation. During this step, the ribosome changes from the pre-translocational (PRE) to the post-translocational (POST) state as the newly formed A-site-bound peptidyl-tRNA and P-site-bound deacylated tRNA move to the P and E sites, respectively. Catalyzes the coordinated movement of the two tRNA molecules, the mRNA and conformational changes in the ribosome. The protein is Elongation factor G of Brucella canis (strain ATCC 23365 / NCTC 10854 / RM-666).